We begin with the raw amino-acid sequence, 224 residues long: Urease accessory protein UreF (224 aa).

It belongs to the UreF family. As to quaternary structure, ureD, UreF and UreG form a complex that acts as a GTP-hydrolysis-dependent molecular chaperone, activating the urease apoprotein by helping to assemble the nickel containing metallocenter of UreC. The UreE protein probably delivers the nickel.

Its subcellular location is the cytoplasm. Required for maturation of urease via the functional incorporation of the urease nickel metallocenter. This chain is Urease accessory protein UreF, found in Pseudomonas fluorescens (strain SBW25).